Consider the following 473-residue polypeptide: Laccase-3 (473 aa).

The N-terminal stretch at 1 to 21 is a signal peptide; the sequence is MSFSSLRRALVFLGACSSALA. 2 consecutive Plastocyanin-like domains span residues 23 to 148 and 160 to 298; these read IGPV…LVIY and VDDE…ILRY. Residue Asn75 is glycosylated (N-linked (GlcNAc...) asparagine). Positions 85, 87, 130, and 132 each coordinate Cu cation. Cystine bridges form between Cys106/Cys462 and Cys138/Cys221. Residues Asn226, Asn283, Asn309, Asn346, Asn350, and Asn374 are each glycosylated (N-linked (GlcNAc...) asparagine). Residues 365–444 form the Plastocyanin-like 3 domain; that stretch reads TVPVLLQILN…AGLAIVFAED (80 aa). Cu cation is bound by residues His410, His413, His415, His426, Cys427, His428, and His432. A glycan (N-linked (GlcNAc...) asparagine) is linked at Asn470.

Belongs to the multicopper oxidase family. In terms of assembly, homodimer. Cu cation serves as cofactor.

It is found in the secreted. It catalyses the reaction 4 hydroquinone + O2 = 4 benzosemiquinone + 2 H2O. Lignin degradation and detoxification of lignin-derived products. This chain is Laccase-3 (LCC3), found in Trametes villosa (White-rot fungus).